The following is a 419-amino-acid chain: 3-isopropylmalate dehydratase large subunit (419 aa).

Residues Cys300, Cys360, and Cys363 each coordinate [4Fe-4S] cluster.

This sequence belongs to the aconitase/IPM isomerase family. LeuC type 2 subfamily. In terms of assembly, heterodimer of LeuC and LeuD. Requires [4Fe-4S] cluster as cofactor.

The enzyme catalyses (2R,3S)-3-isopropylmalate = (2S)-2-isopropylmalate. It functions in the pathway amino-acid biosynthesis; L-leucine biosynthesis; L-leucine from 3-methyl-2-oxobutanoate: step 2/4. Catalyzes the isomerization between 2-isopropylmalate and 3-isopropylmalate, via the formation of 2-isopropylmaleate. In Clostridium botulinum (strain Eklund 17B / Type B), this protein is 3-isopropylmalate dehydratase large subunit.